We begin with the raw amino-acid sequence, 682 residues long: Potassium-transporting ATPase ATP-binding subunit (682 aa).

The next 4 helical transmembrane spans lie at 34–54 (PVMFVVWAGSVLTTLLTLAMV), 58–78 (IAGSALFTGVISLWLWFTVLF), 219–239 (IALTILLIALTIVFLLATATL), and 254–274 (VLVALLVCLIPTTIGGLLSAI). The active-site 4-aspartylphosphate intermediate is D307. ATP contacts are provided by residues D344, E348, 377–384 (FTAQSRMS), and K395. Mg(2+)-binding residues include D518 and D522. 3 helical membrane-spanning segments follow: residues 588 to 608 (FAIIPAAFAATYPQLNALNVM), 616 to 636 (AILSAVIFNALIIIFLIPLAL), and 662 to 682 (LVVPFIGIKVIDVLLTLLGLA).

This sequence belongs to the cation transport ATPase (P-type) (TC 3.A.3) family. Type IA subfamily. In terms of assembly, the system is composed of three essential subunits: KdpA, KdpB and KdpC.

The protein localises to the cell inner membrane. The catalysed reaction is K(+)(out) + ATP + H2O = K(+)(in) + ADP + phosphate + H(+). Its function is as follows. Part of the high-affinity ATP-driven potassium transport (or Kdp) system, which catalyzes the hydrolysis of ATP coupled with the electrogenic transport of potassium into the cytoplasm. This subunit is responsible for energy coupling to the transport system and for the release of the potassium ions to the cytoplasm. This is Potassium-transporting ATPase ATP-binding subunit from Salmonella paratyphi B (strain ATCC BAA-1250 / SPB7).